The sequence spans 1195 residues: MPETSVQNPLRLSENENTRSMFLSASQQQRPSATPSFPRLVRNTTANLSLSDFQVLNPSSKRQNSNSVYDDINSSKRRISRPRFSDIEGKNNDHTYPERTTVKESEKNPSPRYVSSSKRALKRENSVGITQSSALISKSFSENGGSIAHEKWSPENMIKPLNVSQNSLAFVDAGSDEQSKSEIVGGFQRKSNNSQEINDKDNSARDQDFNNSGNNNNNNNHSSNNNDNNNNNNDDNNNNNNSNSRDNNNNSDDSNEREENDSCKPASNKRSGIALIQKLQELYKVIVKQEIELQERCSQLTNSQTTELKSLWTIYKINTDLVNNYVTFITTALLPSQPPHDLVIGQEIVEIYRIERRLWVYGTITFLDVLKNFSNFMDPEVCCQFITHVFVSLSTMISDIPSKYSITWLQRLGDLSRMAIALYPSSFIDWKLSAEHWYTEAMKYIYNHGKLYYHMSTVQQNTLEAFVNLGKSVFCQETFTPSPQYMQLVIDNIYQRAFVERNNGNLRNSLLIEYLKHSEAMLLPSFLESPDLQNVVLSYFIEKFGIDANGCNIFNAEDMFVQNPDFFKYFFRHGPSFAQSHILQIVGFGEPKNPFAILFELPKYLKERKDKKERKKSSNNDSSVTESSTGNSRNDNEDDDEIMSSTTSISDHDLLAEFFNDIDTLRRPILPSMLTNEAWLETLKFLNMTSLKCGIIVLRKFLHGPLGIALPHILPWIYFIISICLKSSQLSDPVSKEFWMIIVKRAFPWDTMVTFMNVLIVYLLDNQTSNSIIGDLCDDYDKLSLSELLELFNEGEELPEILGCWGTLWFDTICEKNTHSISSEDNFQEIGIKDYMALDSPTDGIIFDEKDENGEKFWKRACRTIFLFRELSRSFPIGVIIRNDPLIYRSSFQNTNILGSLVFKLEPLCNIHNNIPVLGALESIIDISEARSENNTDLHAVPELSVNEGDNIFHYVGYKKLRADYTCFDKNGEFLSASLYTTWYVPNSNNTNIEDNINYNSEKENEGLFLECIKSDYPEIDFKTTYFVFDATSWLRHSARIFKLAQNRLLRFAICLTTFQELRFLRKSKDENVMEAATRGIITIRQLYYENKVLPLRFTGNVATHIEENLEFEEQITWRTHVDEFVIESVMKAQEKLESASEPRLSPRRFNYVVLISDDDAMKKKAEEKEIKTLSTRFVFSLCTKLGEQRHLCTD.

Polar residues-rich tracts occupy residues methionine 1 to leucine 10, threonine 18 to proline 35, and valine 55 to valine 68. Disordered stretches follow at residues methionine 1–proline 38, valine 55–threonine 130, serine 179–asparagine 268, and aspartate 610–methionine 643. Basic and acidic residues-rich tracts occupy residues arginine 83–proline 109 and isoleucine 197–aspartate 208. 2 stretches are compositionally biased toward low complexity: residues asparagine 210–aspartate 252 and asparagine 619–threonine 629. A PINc domain is found at threonine 1025 to lysine 1164.

In terms of assembly, transiently interacts with PEX14.

It localises to the cytoplasm. It is found in the nucleus. The protein localises to the peroxisome. In terms of biological role, may be involved in the regulation of gene expression responses of environment-sensing pathways. The protein is EST/SMG-like protein 2 of Saccharomyces cerevisiae (strain ATCC 204508 / S288c) (Baker's yeast).